We begin with the raw amino-acid sequence, 132 residues long: DNA-directed RNA polymerase subunit omega (132 aa).

This sequence belongs to the RNA polymerase subunit omega family. In terms of assembly, the RNAP catalytic core consists of 2 alpha, 1 beta, 1 beta' and 1 omega subunit. When a sigma factor is associated with the core the holoenzyme is formed, which can initiate transcription.

The catalysed reaction is RNA(n) + a ribonucleoside 5'-triphosphate = RNA(n+1) + diphosphate. Functionally, promotes RNA polymerase assembly. Latches the N- and C-terminal regions of the beta' subunit thereby facilitating its interaction with the beta and alpha subunits. This is DNA-directed RNA polymerase subunit omega from Bartonella bacilliformis (strain ATCC 35685 / KC583 / Herrer 020/F12,63).